The sequence spans 98 residues: MSVSIKPLEDRIVVRPLEAEQTTASGLVIPDSAQEKPQEGEVVAIGPGRFDDNGNRVPVDVAVGDVVIYSKYGGTEVKTGGNEYLVLSARDVLAIVVK.

It belongs to the GroES chaperonin family. As to quaternary structure, heptamer of 7 subunits arranged in a ring. Interacts with the chaperonin GroEL.

The protein localises to the cytoplasm. Its function is as follows. Together with the chaperonin GroEL, plays an essential role in assisting protein folding. The GroEL-GroES system forms a nano-cage that allows encapsulation of the non-native substrate proteins and provides a physical environment optimized to promote and accelerate protein folding. GroES binds to the apical surface of the GroEL ring, thereby capping the opening of the GroEL channel. In Paenarthrobacter aurescens (strain TC1), this protein is Co-chaperonin GroES.